The sequence spans 493 residues: Ribonuclease Y (493 aa).

Residues 19 to 39 traverse the membrane as a helical segment; it reads IFAILFLIIVILNLGLLVFLA. Residues 172-241 form the KH domain; the sequence is SASFTVIESD…LTIRNILIND (70 aa). The 93-residue stretch at 300-392 folds into the HD domain; that stretch reads VLSHCLETGF…TQIGDKLSAG (93 aa).

The protein belongs to the RNase Y family.

Its subcellular location is the cell membrane. In terms of biological role, endoribonuclease that initiates mRNA decay. The polypeptide is Ribonuclease Y (Mycoplasma pneumoniae (strain ATCC 29342 / M129 / Subtype 1) (Mycoplasmoides pneumoniae)).